The following is a 257-amino-acid chain: Ribosomal RNA small subunit methyltransferase J (257 aa).

S-adenosyl-L-methionine-binding positions include 107–108 (RD), 123–124 (ER), and Asp177.

It belongs to the methyltransferase superfamily. RsmJ family.

The protein resides in the cytoplasm. The catalysed reaction is guanosine(1516) in 16S rRNA + S-adenosyl-L-methionine = N(2)-methylguanosine(1516) in 16S rRNA + S-adenosyl-L-homocysteine + H(+). Its function is as follows. Specifically methylates the guanosine in position 1516 of 16S rRNA. The protein is Ribosomal RNA small subunit methyltransferase J of Haemophilus influenzae (strain ATCC 51907 / DSM 11121 / KW20 / Rd).